A 331-amino-acid chain; its full sequence is XylDLEGF operon transcriptional activator 3 (331 aa).

Residues 214–315 (ERVVQFIEDN…GELPSDTLRR (102 aa)) form the HTH araC/xylS-type domain. DNA-binding regions (H-T-H motif) lie at residues 231–252 (ERLA…EKHA) and 282–305 (VTEM…RSTF).

The protein resides in the cytoplasm. Its function is as follows. Regulatory protein of the TOL plasmid xyl operons. XylS activates the xylXYZLTEGFJQKIH operon required for the degradation of toluene, m-xylene and p-xylene. This is XylDLEGF operon transcriptional activator 3 (xylS3) from Pseudomonas putida (Arthrobacter siderocapsulatus).